The following is a 584-amino-acid chain: Dihydroxyacetone kinase 1 (584 aa).

At serine 2 the chain carries N-acetylserine. Serine 2 and serine 5 each carry phosphoserine. Residues 7 to 353 (EVTDPVNSSL…LNAFTNAPGW (347 aa)) enclose the DhaK domain. Substrate-binding positions include 51-54 (GSGH), lysine 103, and aspartate 108. Histidine 220 functions as the Tele-hemiaminal-histidine intermediate in the catalytic mechanism. Serine 365 bears the Phosphoserine mark. Positions 386-582 (DKFAEWMKSG…LCEFLKGVQS (197 aa)) constitute a DhaL domain. Residues 415-418 (DGDC) and 459-460 (TS) each bind ATP. The residue at position 512 (serine 512) is a Phosphoserine. Residues 514 to 515 (TM) and 567 to 569 (DPG) contribute to the ATP site.

It belongs to the dihydroxyacetone kinase (DAK) family.

The catalysed reaction is dihydroxyacetone + ATP = dihydroxyacetone phosphate + ADP + H(+). It catalyses the reaction D-glyceraldehyde + ATP = D-glyceraldehyde 3-phosphate + ADP + H(+). It functions in the pathway polyol metabolism; glycerol fermentation; glycerone phosphate from glycerol (oxidative route): step 2/2. Catalyzes both the phosphorylation of dihydroxyacetone and of glyceraldehyde. This is Dihydroxyacetone kinase 1 (DAK1) from Saccharomyces cerevisiae (strain ATCC 204508 / S288c) (Baker's yeast).